A 456-amino-acid chain; its full sequence is Dothistromin biosynthesis regulatory protein aflJ (456 aa).

Residues 74 to 143 enclose the HTH iclR-type domain; sequence LARENQLLAC…PKPGYVAHSG (70 aa). The segment at residues 104 to 123 is a DNA-binding region (H-T-H motif); sequence YSDVADLACVPVDQLRRIAR. Over residues 290 to 300 the composition is skewed to polar residues; it reads KLHNGLSTPPE. The interval 290–314 is disordered; that stretch reads KLHNGLSTPPESDTGPAARAAKASE.

It is found in the nucleus. Transcription coactivator involved in regulation of the dothistromin biosynthesis gene cluster with aflR. In Dothistroma septosporum (strain NZE10 / CBS 128990) (Red band needle blight fungus), this protein is Dothistromin biosynthesis regulatory protein aflJ.